We begin with the raw amino-acid sequence, 169 residues long: Small ribosomal subunit protein uS9 (169 aa).

2 disordered regions span residues 1–29 and 128–169; these read MVEP…TETP and MDPE…YSKR. The span at 9-21 shows a compositional bias: acidic residues; it reads DVQEYDENSEEYP. Residues 150-169 are compositionally biased toward basic residues; the sequence is VERKKAGLKKARKAPQYSKR.

It belongs to the universal ribosomal protein uS9 family.

This is Small ribosomal subunit protein uS9 from Thermobifida fusca (strain YX).